Reading from the N-terminus, the 127-residue chain is Large ribosomal subunit protein bL12 (127 aa).

It belongs to the bacterial ribosomal protein bL12 family. As to quaternary structure, homodimer. Part of the ribosomal stalk of the 50S ribosomal subunit. Forms a multimeric L10(L12)X complex, where L10 forms an elongated spine to which 2 to 4 L12 dimers bind in a sequential fashion. Binds GTP-bound translation factors.

Functionally, forms part of the ribosomal stalk which helps the ribosome interact with GTP-bound translation factors. Is thus essential for accurate translation. The protein is Large ribosomal subunit protein bL12 of Rhizobium etli (strain ATCC 51251 / DSM 11541 / JCM 21823 / NBRC 15573 / CFN 42).